We begin with the raw amino-acid sequence, 205 residues long: Hydrogenase-4 component A (205 aa).

4Fe-4S ferredoxin-type domains lie at 2 to 31, 41 to 72, 73 to 102, and 140 to 172; these read NRFV…TQGL, KTST…SQRD, DAIQ…ASGS, and QTVA…LITG. Positions 12, 15, 18, 22, 51, 54, 59, 63, 82, 85, 88, 92, 146, 149, 158, and 162 each coordinate [4Fe-4S] cluster.

The cofactor is [4Fe-4S] cluster.

Functionally, probable electron transfer protein for hydrogenase 4. This chain is Hydrogenase-4 component A, found in Escherichia coli (strain K12).